A 572-amino-acid polypeptide reads, in one-letter code: Methionine--tRNA ligase (572 aa).

The 'HIGH' region motif lies at 11-21 (PYINGIKHLGN). Zn(2+) contacts are provided by Cys-143, Cys-146, Cys-156, and Cys-159. Positions 346 to 350 (QFSTS) match the 'KMSKS' region motif. Position 349 (Thr-349) interacts with ATP.

Belongs to the class-I aminoacyl-tRNA synthetase family. MetG type 1 subfamily. In terms of assembly, monomer. Requires Zn(2+) as cofactor.

The protein resides in the cytoplasm. It carries out the reaction tRNA(Met) + L-methionine + ATP = L-methionyl-tRNA(Met) + AMP + diphosphate. Is required not only for elongation of protein synthesis but also for the initiation of all mRNA translation through initiator tRNA(fMet) aminoacylation. The protein is Methionine--tRNA ligase of Cereibacter sphaeroides (strain ATCC 17025 / ATH 2.4.3) (Rhodobacter sphaeroides).